Reading from the N-terminus, the 937-residue chain is Valine--tRNA ligase (937 aa).

Positions 44-54 (PNVTGTLHMGH) match the 'HIGH' region motif. The 'KMSKS' region motif lies at 548–552 (KMSKS). Lysine 551 contributes to the ATP binding site. A coiled-coil region spans residues 874 to 937 (AAETARLTKE…KLKAQLLKLA (64 aa)).

The protein belongs to the class-I aminoacyl-tRNA synthetase family. ValS type 1 subfamily. In terms of assembly, monomer.

The protein localises to the cytoplasm. The enzyme catalyses tRNA(Val) + L-valine + ATP = L-valyl-tRNA(Val) + AMP + diphosphate. Functionally, catalyzes the attachment of valine to tRNA(Val). As ValRS can inadvertently accommodate and process structurally similar amino acids such as threonine, to avoid such errors, it has a 'posttransfer' editing activity that hydrolyzes mischarged Thr-tRNA(Val) in a tRNA-dependent manner. The polypeptide is Valine--tRNA ligase (Laribacter hongkongensis (strain HLHK9)).